The following is a 121-amino-acid chain: Small ribosomal subunit protein bS16 (121 aa).

Residues 85-110 (REARNNPKKAEPGKKAQERAAERAAK) show a composition bias toward basic and acidic residues. The interval 85 to 121 (REARNNPKKAEPGKKAQERAAERAAKAAEASEAASAE) is disordered. Positions 111-121 (AAEASEAASAE) are enriched in low complexity.

The protein belongs to the bacterial ribosomal protein bS16 family.

The chain is Small ribosomal subunit protein bS16 from Azorhizobium caulinodans (strain ATCC 43989 / DSM 5975 / JCM 20966 / LMG 6465 / NBRC 14845 / NCIMB 13405 / ORS 571).